We begin with the raw amino-acid sequence, 602 residues long: UvrABC system protein C (602 aa).

Residues 15-92 (DLPGSYQMKD…IQKYQPYYNI (78 aa)) form the GIY-YIG domain. The UVR domain maps to 197–232 (GKAKASLTAKMERAAKNLQFERAAEIRDQLHYIEQT).

It belongs to the UvrC family. As to quaternary structure, interacts with UvrB in an incision complex.

The protein localises to the cytoplasm. Functionally, the UvrABC repair system catalyzes the recognition and processing of DNA lesions. UvrC both incises the 5' and 3' sides of the lesion. The N-terminal half is responsible for the 3' incision and the C-terminal half is responsible for the 5' incision. This Lacticaseibacillus casei (strain BL23) (Lactobacillus casei) protein is UvrABC system protein C.